A 437-amino-acid chain; its full sequence is UDP-N-acetylmuramoylalanine--D-glutamate ligase (437 aa).

112–118 (GSNGKST) serves as a coordination point for ATP.

This sequence belongs to the MurCDEF family.

The protein localises to the cytoplasm. The catalysed reaction is UDP-N-acetyl-alpha-D-muramoyl-L-alanine + D-glutamate + ATP = UDP-N-acetyl-alpha-D-muramoyl-L-alanyl-D-glutamate + ADP + phosphate + H(+). Its pathway is cell wall biogenesis; peptidoglycan biosynthesis. Functionally, cell wall formation. Catalyzes the addition of glutamate to the nucleotide precursor UDP-N-acetylmuramoyl-L-alanine (UMA). This Haemophilus influenzae (strain PittEE) protein is UDP-N-acetylmuramoylalanine--D-glutamate ligase.